We begin with the raw amino-acid sequence, 130 residues long: Small ribosomal subunit protein uS8A (130 aa).

The protein belongs to the universal ribosomal protein uS8 family.

The polypeptide is Small ribosomal subunit protein uS8A (RpS15Aa) (Drosophila melanogaster (Fruit fly)).